Consider the following 306-residue polypeptide: Tyrosine recombinase XerC (306 aa).

One can recognise a Core-binding (CB) domain in the interval 1 to 90; the sequence is MYVHIDNFLV…AWRSFYRYLY (90 aa). Residues 111–298 form the Tyr recombinase domain; sequence RLPRFLYEDE…TGERLKKVYR (188 aa). Catalysis depends on residues Arg151, Lys175, His250, Arg253, and His276. Tyr285 functions as the O-(3'-phospho-DNA)-tyrosine intermediate in the catalytic mechanism.

It belongs to the 'phage' integrase family. XerC subfamily. In terms of assembly, forms a cyclic heterotetrameric complex composed of two molecules of XerC and two molecules of XerD.

Its subcellular location is the cytoplasm. In terms of biological role, site-specific tyrosine recombinase, which acts by catalyzing the cutting and rejoining of the recombining DNA molecules. The XerC-XerD complex is essential to convert dimers of the bacterial chromosome into monomers to permit their segregation at cell division. It also contributes to the segregational stability of plasmids. In Pelotomaculum thermopropionicum (strain DSM 13744 / JCM 10971 / SI), this protein is Tyrosine recombinase XerC.